We begin with the raw amino-acid sequence, 415 residues long: MDYREFFSQFRHLSEKPGIGGKIKILPEDFVVIEDPLPQIFEGRKHAIFLLKKRNWDTMAVIKEIAKRAGISHRDIGFAGTKDRHAVTYQYISVPAGAKEKVESIQIRDVELRFVSYGRFIKLGHLLGNRFRIIIRDVEGSAFDRTKEIIRELREKGGFPNYFGYQRFGERRVVNHLIGKLLLQGEFDEAARLFLGYADGSMEGDEARRNFWETEDVDRALEEFPRFLRYERTLLYTYKKTGSWKKAFLSLPLPIMRIFIHAYQSYLFNLYLSRRIEELPLNEPLVGDIVVQVKGGIPYRDRTYRVTETNLNFVREKVKRGEAMVSGPLFGFAMRRAKGIPGELEEEILEGEGITLDAFKKLPKPMAEPGRRRELLIRPIGLTYGYLPETGMCFRFFLPKGVYATSVLREIMKDH.

Asp-83 acts as the Nucleophile in catalysis. One can recognise a TRUD domain in the interval 158–378 (GFPNYFGYQR…PGRRRELLIR (221 aa)).

The protein belongs to the pseudouridine synthase TruD family.

The catalysed reaction is uridine(13) in tRNA = pseudouridine(13) in tRNA. Functionally, could be responsible for synthesis of pseudouridine from uracil-13 in transfer RNAs. This Thermococcus gammatolerans (strain DSM 15229 / JCM 11827 / EJ3) protein is Probable tRNA pseudouridine synthase D.